The chain runs to 193 residues: Coiled-coil domain-containing protein 184 (193 aa).

A coiled-coil region spans residues 39–68; sequence GMKELMEHLKAQLQALFEDVRAMRGALDEQ. The tract at residues 101-176 is disordered; the sequence is GLGVAGGKGS…LGENGPLVEP (76 aa). Residues 135–146 show a composition bias toward acidic residues; the sequence is PDEEDEEEEEEK.

This Rattus norvegicus (Rat) protein is Coiled-coil domain-containing protein 184 (Ccdc184).